Reading from the N-terminus, the 425-residue chain is [Pyruvate dehydrogenase (acetyl-transferring)] kinase, mitochondrial (425 aa).

A Phosphohistidine; by autocatalysis modification is found at His178. The Histidine kinase domain occupies 180–418 (NVAVEIALDI…DVYIHLNRLC (239 aa)). ATP contacts are provided by residues 296–303 (EILKNSLR), Asp336, 355–356 (TT), and 379–384 (GFGFGL).

This sequence belongs to the PDK/BCKDK protein kinase family.

The protein resides in the mitochondrion matrix. The catalysed reaction is L-seryl-[pyruvate dehydrogenase E1 alpha subunit] + ATP = O-phospho-L-seryl-[pyruvate dehydrogenase E1 alpha subunit] + ADP + H(+). Its function is as follows. Inhibits the mitochondrial pyruvate dehydrogenase complex by phosphorylation of the E1 alpha subunit, thus contributing to the regulation of glucose metabolism. The sequence is that of [Pyruvate dehydrogenase (acetyl-transferring)] kinase, mitochondrial (pkp1) from Schizosaccharomyces pombe (strain 972 / ATCC 24843) (Fission yeast).